Here is a 72-residue protein sequence, read N- to C-terminus: Large ribosomal subunit protein bL31c (72 aa).

The protein belongs to the bacterial ribosomal protein bL31 family. Type A subfamily. As to quaternary structure, part of the 50S ribosomal subunit.

The protein localises to the plastid. Its subcellular location is the chloroplast. Functionally, binds the 23S rRNA. This is Large ribosomal subunit protein bL31c from Guillardia theta (Cryptophyte).